We begin with the raw amino-acid sequence, 206 residues long: RNA pyrophosphohydrolase (206 aa).

The Nudix hydrolase domain occupies 6–149; it reads GYRPNVGIVL…KRGVYARALR (144 aa). The Nudix box signature appears at 38–59; sequence GGMNTDETPVEAMYRELQEETG. The tract at residues 175–206 is disordered; sequence MPGHTAGHDRPRKRPRSRGYWPKKAQGDVPPT.

The protein belongs to the Nudix hydrolase family. RppH subfamily. It depends on a divalent metal cation as a cofactor.

Its function is as follows. Accelerates the degradation of transcripts by removing pyrophosphate from the 5'-end of triphosphorylated RNA, leading to a more labile monophosphorylated state that can stimulate subsequent ribonuclease cleavage. This chain is RNA pyrophosphohydrolase, found in Stenotrophomonas maltophilia (strain R551-3).